A 154-amino-acid polypeptide reads, in one-letter code: SsrA-binding protein (154 aa).

Belongs to the SmpB family.

The protein localises to the cytoplasm. Functionally, required for rescue of stalled ribosomes mediated by trans-translation. Binds to transfer-messenger RNA (tmRNA), required for stable association of tmRNA with ribosomes. tmRNA and SmpB together mimic tRNA shape, replacing the anticodon stem-loop with SmpB. tmRNA is encoded by the ssrA gene; the 2 termini fold to resemble tRNA(Ala) and it encodes a 'tag peptide', a short internal open reading frame. During trans-translation Ala-aminoacylated tmRNA acts like a tRNA, entering the A-site of stalled ribosomes, displacing the stalled mRNA. The ribosome then switches to translate the ORF on the tmRNA; the nascent peptide is terminated with the 'tag peptide' encoded by the tmRNA and targeted for degradation. The ribosome is freed to recommence translation, which seems to be the essential function of trans-translation. The protein is SsrA-binding protein of Acetivibrio thermocellus (strain ATCC 27405 / DSM 1237 / JCM 9322 / NBRC 103400 / NCIMB 10682 / NRRL B-4536 / VPI 7372) (Clostridium thermocellum).